A 167-amino-acid polypeptide reads, in one-letter code: Small ribosomal subunit protein uS5 (167 aa).

Residues 12-75 enclose the S5 DRBM domain; that stretch reads LEERVVTINR…EDAKKNMVLV (64 aa).

Belongs to the universal ribosomal protein uS5 family. Part of the 30S ribosomal subunit. Contacts proteins S4 and S8.

Its function is as follows. With S4 and S12 plays an important role in translational accuracy. Functionally, located at the back of the 30S subunit body where it stabilizes the conformation of the head with respect to the body. The chain is Small ribosomal subunit protein uS5 from Listeria monocytogenes serotype 4b (strain F2365).